We begin with the raw amino-acid sequence, 194 residues long: Molybdenum cofactor guanylyltransferase (194 aa).

GTP-binding positions include 12–14 (LAG), lysine 25, asparagine 53, aspartate 71, and aspartate 101. Aspartate 101 is a Mg(2+) binding site.

This sequence belongs to the MobA family. In terms of assembly, monomer. Mg(2+) serves as cofactor.

The protein resides in the cytoplasm. The enzyme catalyses Mo-molybdopterin + GTP + H(+) = Mo-molybdopterin guanine dinucleotide + diphosphate. Transfers a GMP moiety from GTP to Mo-molybdopterin (Mo-MPT) cofactor (Moco or molybdenum cofactor) to form Mo-molybdopterin guanine dinucleotide (Mo-MGD) cofactor. This Escherichia coli O6:H1 (strain CFT073 / ATCC 700928 / UPEC) protein is Molybdenum cofactor guanylyltransferase.